Here is a 187-residue protein sequence, read N- to C-terminus: Anterior gradient protein 1 (187 aa).

The signal sequence occupies residues 1–20 (MQTGLSLVCLVLLCSALGEA).

Belongs to the AGR family.

It is found in the secreted. Its function is as follows. Probably involved in cement gland formation. This chain is Anterior gradient protein 1 (ag1), found in Xenopus tropicalis (Western clawed frog).